The chain runs to 143 residues: MLQPKKTKFRKAFKGRIHGNAKGGTSLNFGSYGLKAMEPERITARQIEAARRAISRAIKRQGRLWIRIFPDVPVSSKPAEVRMGKGKGSPEYWAARVKPGRILFELDGVPGPVAALAFERAAMKLPIKTKVIARLGDTSHLEG.

It belongs to the universal ribosomal protein uL16 family. As to quaternary structure, part of the 50S ribosomal subunit.

Its function is as follows. Binds 23S rRNA and is also seen to make contacts with the A and possibly P site tRNAs. The polypeptide is Large ribosomal subunit protein uL16 (Sphingopyxis alaskensis (strain DSM 13593 / LMG 18877 / RB2256) (Sphingomonas alaskensis)).